Reading from the N-terminus, the 354-residue chain is Chorismate synthase (354 aa).

NADP(+) contacts are provided by R48 and R54. FMN-binding positions include 125-127, 238-239, G278, 293-297, and R319; these read RSS, NA, and KPTSS.

Belongs to the chorismate synthase family. Homotetramer. FMNH2 is required as a cofactor.

It catalyses the reaction 5-O-(1-carboxyvinyl)-3-phosphoshikimate = chorismate + phosphate. It functions in the pathway metabolic intermediate biosynthesis; chorismate biosynthesis; chorismate from D-erythrose 4-phosphate and phosphoenolpyruvate: step 7/7. Functionally, catalyzes the anti-1,4-elimination of the C-3 phosphate and the C-6 proR hydrogen from 5-enolpyruvylshikimate-3-phosphate (EPSP) to yield chorismate, which is the branch point compound that serves as the starting substrate for the three terminal pathways of aromatic amino acid biosynthesis. This reaction introduces a second double bond into the aromatic ring system. This Buchnera aphidicola subsp. Acyrthosiphon pisum (strain 5A) protein is Chorismate synthase.